The following is a 514-amino-acid chain: Sugar transport protein 4 (514 aa).

The Cytoplasmic portion of the chain corresponds to 1 to 22; that stretch reads MAGGFVSQTPGVRNYNYKLTPK. The next 12 membrane-spanning stretches (helical) occupy residues 23 to 43, 80 to 100, 117 to 137, 140 to 160, 172 to 192, 202 to 222, 283 to 303, 321 to 341, 348 to 368, 387 to 407, 426 to 446, and 451 to 471; these read VFVT…DLGI, LLTL…LFAS, FTFF…MLLI, ILLG…LSEM, GFQV…YFTA, ISLG…LILP, LIMT…VITF, LSAM…VFTV, ILFL…GAMI, LIVA…GPLG, INVS…LTML, and FGLF…IYLM. At 472–514 the chain is on the cytoplasmic side; it reads LPETKNVPIEEMNRVWKAHWFWGKFIPDEAVNMGAAEMQQKSV.

The protein belongs to the major facilitator superfamily. Sugar transporter (TC 2.A.1.1) family. In terms of tissue distribution, mostly in flowers and roots, especially in anthers, including pollen, and root tips. Also present in some hydathodes.

The protein localises to the cell membrane. In terms of biological role, mediates an active uptake of hexoses, probably by sugar/hydrogen symport. Can transport glucose, methylglucose, galactose, xylose and mannose, but not fructose. In Arabidopsis thaliana (Mouse-ear cress), this protein is Sugar transport protein 4 (STP4).